Consider the following 441-residue polypeptide: tRNA modification GTPase MnmE (441 aa).

The (6S)-5-formyl-5,6,7,8-tetrahydrofolate site is built by Arg-21, Glu-79, and Lys-118. The TrmE-type G domain maps to 214–370; that stretch reads GFKIAIVGKP…LEGYLKTQDT (157 aa). GTP contacts are provided by residues 224 to 229, 243 to 249, and 268 to 271; these read NVGKSS, SDEAGTT, and DTAG. Mg(2+)-binding residues include Ser-228 and Thr-249. A (6S)-5-formyl-5,6,7,8-tetrahydrofolate-binding site is contributed by Lys-441.

It belongs to the TRAFAC class TrmE-Era-EngA-EngB-Septin-like GTPase superfamily. TrmE GTPase family. Homodimer. Heterotetramer of two MnmE and two MnmG subunits. Requires K(+) as cofactor.

It is found in the cytoplasm. Exhibits a very high intrinsic GTPase hydrolysis rate. Involved in the addition of a carboxymethylaminomethyl (cmnm) group at the wobble position (U34) of certain tRNAs, forming tRNA-cmnm(5)s(2)U34. This Campylobacter concisus (strain 13826) protein is tRNA modification GTPase MnmE.